Consider the following 1776-residue polypeptide: 6-methylsalicylic acid synthase (1776 aa).

Over residues 1–18 (MHSVSPSTYPSGGTSPAP) the composition is skewed to low complexity. The disordered stretch occupies residues 1–26 (MHSVSPSTYPSGGTSPAPADTPGTEY). Positions 32–457 (SNDVAVVGMA…GTVSHAVIEE (426 aa)) constitute a Ketosynthase family 3 (KS3) domain. Catalysis depends on for beta-ketoacyl synthase activity residues C204, H339, and H379. Residues 567–880 (VWVFSGHGAQ…IAQLHCRGAE (314 aa)) are malonyl-CoA:ACP transacylase (MAT) domain. The tract at residues 925–1044 (HTLLGQRIPV…AYWDRKVLGS (120 aa)) is N-terminal hotdog fold. Residues 925–1196 (HTLLGQRIPV…FTAMRFSEIE (272 aa)) form a dehydratase (DH) domain region. The region spanning 925–1201 (HTLLGQRIPV…FSEIEGTPGV (277 aa)) is the PKS/mFAS DH domain. Catalysis depends on H957, which acts as the Proton acceptor; for dehydratase activity. The tract at residues 1058-1201 (TTKLADNFSI…FSEIEGTPGV (144 aa)) is C-terminal hotdog fold. Residue D1113 is the Proton donor; for dehydratase activity of the active site. The interval 1205-1657 (MESLVHQIAW…LRSLAIDDGE (453 aa)) is product template (PT) domain. Residues 1700-1774 (AYLDEKIRGC…HLVVWFAEKI (75 aa)) form the Carrier domain. The residue at position 1734 (S1734) is an O-(pantetheine 4'-phosphoryl)serine.

It localises to the cytoplasm. The protein localises to the cytosol. It carries out the reaction 3 malonyl-CoA + acetyl-CoA + NADPH + 3 H(+) = 6-methylsalicylate + 3 CO2 + NADP(+) + 4 CoA + H2O. The protein operates within mycotoxin biosynthesis; patulin biosynthesis. 6-methylsalicylic acid synthase; part of the gene cluster that mediates the biosynthesis of patulin, an acetate-derived tetraketide mycotoxin produced by several fungal species that shows antimicrobial properties against several bacteria. PatK catalyzes the first step of the pathway which is the synthesis of 6-methylsalicylic acid via condensation of 1 acetate and 3 malonate units. The pathway begins with the synthesis of 6-methylsalicylic acid by the polyketide synthase (PKS) patK via condensation of acetate and malonate units. The 6-methylsalicylic acid decarboxylase patG then catalyzes the decarboxylation of 6-methylsalicylic acid to yield m-cresol (also known as 3-methylphenol). These first reactions occur in the cytosol. The intermediate m-cresol is then transported into the endoplasmic reticulum where the cytochrome P450 monooxygenase patH converts it to m-hydroxybenzyl alcohol, which is further converted to gentisyl alcohol by the cytochrome P450 monooxygenase patI. The oxidoreductases patJ and patO further convert gentisyl alcohol to isoepoxydon in the vacuole. PatN catalyzes then the transformation of isoepoxydon into phyllostine. The cluster protein patF is responsible for the conversion from phyllostine to neopatulin whereas the alcohol dehydrogenase patD converts neopatulin to E-ascladiol. The steps between isoepoxydon and E-ascladiol occur in the cytosol, and E-ascladiol is probably secreted to the extracellular space by one of the cluster-specific transporters patC or patM. Finally, the secreted patulin synthase patE catalyzes the conversion of E-ascladiol to patulin. This is 6-methylsalicylic acid synthase from Penicillium expansum (Blue mold rot fungus).